Reading from the N-terminus, the 243-residue chain is Carboxy-S-adenosyl-L-methionine synthase (243 aa).

S-adenosyl-L-methionine-binding positions include Y40, G65–S67, D90–N91, D118–I119, N133, and R200.

Belongs to the class I-like SAM-binding methyltransferase superfamily. Cx-SAM synthase family. Homodimer.

The catalysed reaction is prephenate + S-adenosyl-L-methionine = carboxy-S-adenosyl-L-methionine + 3-phenylpyruvate + H2O. Its function is as follows. Catalyzes the conversion of S-adenosyl-L-methionine (SAM) to carboxy-S-adenosyl-L-methionine (Cx-SAM). The chain is Carboxy-S-adenosyl-L-methionine synthase from Shewanella sp. (strain ANA-3).